Reading from the N-terminus, the 294-residue chain is uncharacterized protein (294 aa).

In terms of domain architecture, Tyrosine-protein phosphatase spans 13 to 151 (QCSQIRPYLY…LIDLEQKLRG (139 aa)). The active-site Phosphocysteine intermediate is the Cys95. The tract at residues 234-294 (PTLLVPSSSS…WRLSFHKDVV (61 aa)) is disordered.

The protein belongs to the protein-tyrosine phosphatase family. Non-receptor class dual specificity subfamily.

This is an uncharacterized protein from Caenorhabditis elegans.